We begin with the raw amino-acid sequence, 363 residues long: Aminomethyltransferase (363 aa).

The protein belongs to the GcvT family. As to quaternary structure, the glycine cleavage system is composed of four proteins: P, T, L and H.

The enzyme catalyses N(6)-[(R)-S(8)-aminomethyldihydrolipoyl]-L-lysyl-[protein] + (6S)-5,6,7,8-tetrahydrofolate = N(6)-[(R)-dihydrolipoyl]-L-lysyl-[protein] + (6R)-5,10-methylene-5,6,7,8-tetrahydrofolate + NH4(+). Its function is as follows. The glycine cleavage system catalyzes the degradation of glycine. This Thioalkalivibrio sulfidiphilus (strain HL-EbGR7) protein is Aminomethyltransferase.